The chain runs to 100 residues: Urease subunit gamma (100 aa).

This sequence belongs to the urease gamma subunit family. In terms of assembly, heterotrimer of UreA (gamma), UreB (beta) and UreC (alpha) subunits. Three heterotrimers associate to form the active enzyme.

It localises to the cytoplasm. The catalysed reaction is urea + 2 H2O + H(+) = hydrogencarbonate + 2 NH4(+). The protein operates within nitrogen metabolism; urea degradation; CO(2) and NH(3) from urea (urease route): step 1/1. This chain is Urease subunit gamma, found in Klebsiella pneumoniae.